Reading from the N-terminus, the 498-residue chain is ATP synthase subunit beta, chloroplastic (498 aa).

172-179 (GGAGVGKT) serves as a coordination point for ATP.

This sequence belongs to the ATPase alpha/beta chains family. In terms of assembly, F-type ATPases have 2 components, CF(1) - the catalytic core - and CF(0) - the membrane proton channel. CF(1) has five subunits: alpha(3), beta(3), gamma(1), delta(1), epsilon(1). CF(0) has four main subunits: a(1), b(1), b'(1) and c(9-12).

The protein localises to the plastid. It localises to the chloroplast thylakoid membrane. It catalyses the reaction ATP + H2O + 4 H(+)(in) = ADP + phosphate + 5 H(+)(out). Functionally, produces ATP from ADP in the presence of a proton gradient across the membrane. The catalytic sites are hosted primarily by the beta subunits. This chain is ATP synthase subunit beta, chloroplastic, found in Coffea arabica (Arabian coffee).